We begin with the raw amino-acid sequence, 87 residues long: Translation initiation factor IF-1 1 (87 aa).

One can recognise an S1-like domain in the interval 1-72; the sequence is MAKEELLELD…TKGRINFRHK (72 aa). Residues 68 to 87 form a disordered region; the sequence is NFRHKDANSPRPPRTGQPRR. Over residues 77-87 the composition is skewed to pro residues; the sequence is PRPPRTGQPRR.

The protein belongs to the IF-1 family. As to quaternary structure, component of the 30S ribosomal translation pre-initiation complex which assembles on the 30S ribosome in the order IF-2 and IF-3, IF-1 and N-formylmethionyl-tRNA(fMet); mRNA recruitment can occur at any time during PIC assembly.

It localises to the cytoplasm. In terms of biological role, one of the essential components for the initiation of protein synthesis. Stabilizes the binding of IF-2 and IF-3 on the 30S subunit to which N-formylmethionyl-tRNA(fMet) subsequently binds. Helps modulate mRNA selection, yielding the 30S pre-initiation complex (PIC). Upon addition of the 50S ribosomal subunit IF-1, IF-2 and IF-3 are released leaving the mature 70S translation initiation complex. This chain is Translation initiation factor IF-1 1, found in Burkholderia lata (strain ATCC 17760 / DSM 23089 / LMG 22485 / NCIMB 9086 / R18194 / 383).